Consider the following 151-residue polypeptide: uncharacterized protein (151 aa).

Transmembrane regions (helical) follow at residues Leu12 to Ile32, Leu59 to Leu79, and Tyr114 to Gly134.

Its subcellular location is the cell membrane. This is an uncharacterized protein from Bacillus subtilis (strain 168).